Here is a 537-residue protein sequence, read N- to C-terminus: uncharacterized protein (537 aa).

The segment at 10-56 (HHDVEPQNVEEEPPLTGQTIVTEDKLETSAKDKKHESPSMSEDEEGS) is disordered. Residues 31-46 (TEDKLETSAKDKKHES) are compositionally biased toward basic and acidic residues. 12 helical membrane passes run 90–110 (FVAT…TACI), 133–153 (LFIV…DIFG), 156–176 (WVYV…ALAY), 180–200 (MMAI…ANVA), 213–233 (GFGI…GSPI), 243–263 (WFYW…VLCP), 313–333 (PIIM…FLYL), 348–368 (YMGA…VVML), 393–413 (FLIS…FAFT), 422–442 (SPLI…LAMI), 457–477 (IAAF…LGII), and 492–512 (AFIS…GHLI).

This sequence belongs to the major facilitator superfamily. CAR1 family.

It is found in the endoplasmic reticulum. Its subcellular location is the golgi apparatus. The protein localises to the membrane. This is an uncharacterized protein from Schizosaccharomyces pombe (strain 972 / ATCC 24843) (Fission yeast).